Reading from the N-terminus, the 193-residue chain is dCTP deaminase (193 aa).

DCTP contacts are provided by residues arginine 110 to arginine 115, aspartate 128, valine 136 to glutamate 138, tyrosine 171, lysine 178, and glutamine 182. The Proton donor/acceptor role is filled by glutamate 138. Residues arginine 169–aspartate 193 are disordered.

It belongs to the dCTP deaminase family. As to quaternary structure, homotrimer.

The enzyme catalyses dCTP + H2O + H(+) = dUTP + NH4(+). It functions in the pathway pyrimidine metabolism; dUMP biosynthesis; dUMP from dCTP (dUTP route): step 1/2. Its function is as follows. Catalyzes the deamination of dCTP to dUTP. The protein is dCTP deaminase of Pectobacterium carotovorum subsp. carotovorum (strain PC1).